Consider the following 180-residue polypeptide: Kappa-casein (180 aa).

The signal sequence occupies residues 1-21; the sequence is MMKHFLLVVNILAVTLPFLAA. Thr132, Thr142, Thr147, and Thr153 each carry an O-linked (GalNAc...) threonine glycan. Ser160 is subject to Phosphoserine; alternate. O-linked (GalNAc...) serine; alternate glycosylation occurs at Ser160.

It belongs to the kappa-casein family. In terms of tissue distribution, mammary gland specific. Secreted in milk.

It is found in the secreted. Functionally, kappa-casein stabilizes micelle formation, preventing casein precipitation in milk. The protein is Kappa-casein (CSN3) of Oryctolagus cuniculus (Rabbit).